A 320-amino-acid polypeptide reads, in one-letter code: Mitochondrial glutamate carrier 2 (320 aa).

Solcar repeat units follow at residues Leu11–Leu97, Arg105–Leu215, and Ala224–Glu313. 3 consecutive transmembrane segments (helical) span residues Leu17–Ala37, Phe66–Ile86, and Glu110–Met128. Ser150 bears the Phosphoserine mark. 3 helical membrane passes run Gly190–Ala210, Phe230–Leu250, and Ala293–Glu313.

This sequence belongs to the mitochondrial carrier (TC 2.A.29) family.

It is found in the mitochondrion inner membrane. It carries out the reaction L-glutamate(in) + H(+)(in) = L-glutamate(out) + H(+)(out). Functionally, responsible for the transport of glutamate from the cytosol into the mitochondrial matrix with the concomitant import of a proton (symport system). The protein is Mitochondrial glutamate carrier 2 (Slc25a18) of Mus musculus (Mouse).